A 154-amino-acid chain; its full sequence is Ribosomal RNA large subunit methyltransferase H (154 aa).

Leu71 and Gly103 together coordinate S-adenosyl-L-methionine.

The protein belongs to the RNA methyltransferase RlmH family. As to quaternary structure, homodimer.

It localises to the cytoplasm. It carries out the reaction pseudouridine(1915) in 23S rRNA + S-adenosyl-L-methionine = N(3)-methylpseudouridine(1915) in 23S rRNA + S-adenosyl-L-homocysteine + H(+). Its function is as follows. Specifically methylates the pseudouridine at position 1915 (m3Psi1915) in 23S rRNA. In Solidesulfovibrio magneticus (strain ATCC 700980 / DSM 13731 / RS-1) (Desulfovibrio magneticus), this protein is Ribosomal RNA large subunit methyltransferase H.